Here is a 405-residue protein sequence, read N- to C-terminus: Mevalonate 3,5-bisphosphate decarboxylase (405 aa).

It belongs to the mevalonate 3,5-bisphosphate decarboxylase family. In terms of assembly, homodimer.

The catalysed reaction is (R)-3,5-bisphosphomevalonate + H(+) = isopentenyl phosphate + phosphate + CO2. It participates in isoprenoid biosynthesis; isopentenyl diphosphate biosynthesis via mevalonate pathway. In terms of biological role, catalyzes the ATP-independent decarboxylation of (R)-mevalonate 3,5-bisphosphate to isopentenyl phosphate. Functions in an alternative mevalonate pathway, only present in extreme acidophiles of the Thermoplasmatales order, which passes through mevalonate 3-phosphate rather than mevalonate 5-phosphate. The chain is Mevalonate 3,5-bisphosphate decarboxylase from Thermoplasma acidophilum (strain ATCC 25905 / DSM 1728 / JCM 9062 / NBRC 15155 / AMRC-C165).